The chain runs to 271 residues: Small ribosomal subunit protein uS2 (271 aa).

Belongs to the universal ribosomal protein uS2 family.

The sequence is that of Small ribosomal subunit protein uS2 from Wolbachia pipientis subsp. Culex pipiens (strain wPip).